Reading from the N-terminus, the 225-residue chain is Uridylate kinase (225 aa).

Gly9–Ser10 contributes to the ATP binding site. Gly44 lines the UMP pocket. ATP-binding residues include Gly45 and Arg49. UMP is bound by residues Asp66 and Thr114 to Thr120. Residues Thr140, Asn141, Tyr146, and Asp149 each contribute to the ATP site.

It belongs to the UMP kinase family. Homohexamer.

It is found in the cytoplasm. The catalysed reaction is UMP + ATP = UDP + ADP. The protein operates within pyrimidine metabolism; CTP biosynthesis via de novo pathway; UDP from UMP (UMPK route): step 1/1. With respect to regulation, inhibited by UTP. Catalyzes the reversible phosphorylation of UMP to UDP. The protein is Uridylate kinase of Thermococcus sibiricus (strain DSM 12597 / MM 739).